Here is a 130-residue protein sequence, read N- to C-terminus: Small ribosomal subunit protein uS9 (130 aa).

It belongs to the universal ribosomal protein uS9 family.

In Burkholderia pseudomallei (strain K96243), this protein is Small ribosomal subunit protein uS9.